Consider the following 221-residue polypeptide: Tetraspanin-2 (221 aa).

Residues 1–13 lie on the Cytoplasmic side of the membrane; it reads MGRFRGGLRCIKY. The chain crosses the membrane as a helical span at residues 14 to 34; the sequence is LLLGFNLLFWLAGSAVIAFGL. Topologically, residues 35–54 are extracellular; it reads WFRFGGTMKDLSSEDKSPEY. A helical membrane pass occupies residues 55–75; it reads FYVGLYVLVGAGALMMTVGFF. Topologically, residues 76–90 are cytoplasmic; it reads GCCGAMRESQCVLGS. Residues 91 to 111 form a helical membrane-spanning segment; sequence FFTCLLVIFAAEVTTGVFAFI. Residues 112-188 are Extracellular-facing; it reads GKDVAIRHVQ…ETVISAKLQL (77 aa). A glycan (N-linked (GlcNAc...) asparagine) is linked at Asn-139. The chain crosses the membrane as a helical span at residues 189–209; sequence IGIVGIGIAGLTIFGMIFSMV. Residues 210-221 are Cytoplasmic-facing; the sequence is LCCAIRNSRDVI.

Belongs to the tetraspanin (TM4SF) family.

Its subcellular location is the membrane. Its function is as follows. May play a role in signalling in oligodendrocytes in the early stages of their terminal differentiation into myelin-forming glia and may also function in stabilizing the mature sheath. The polypeptide is Tetraspanin-2 (Tspan2) (Mus musculus (Mouse)).